Consider the following 260-residue polypeptide: UPF0246 protein Bcep18194_A5551 (260 aa).

It belongs to the UPF0246 family.

This Burkholderia lata (strain ATCC 17760 / DSM 23089 / LMG 22485 / NCIMB 9086 / R18194 / 383) protein is UPF0246 protein Bcep18194_A5551.